Here is a 60-residue protein sequence, read N- to C-terminus: Anionic antimicrobial peptide 2 (60 aa).

In terms of tissue distribution, hemolymph.

It localises to the secreted. Its function is as follows. Antimicrobial protein. Has antibacterial activity against the Gram-positive bacteria M.luteus (MIC=86.6 uM), L.monocytogenes (MIC=86.6 uM), and S.lutea (MIC=86.6 uM). Lacks antibacterial activity against the Gram-positive bacteria B.circulans and S.aureus, and the Gram-negative bacteria E.coli D31, E.coli ATCC 25922, and S.typhimurium. Has antifungal activity against P.pastoris (MIC=86.6 uM) and P.stipitis (MIC=90.9 uM), but lacks antifungal activity against A.niger, C.albicans, C.albidus, C.fructus, C.wickerhamii, F.oxysporum, S.cerevisiae, S.pombe, T.harzianum, and Z.marxianus. This chain is Anionic antimicrobial peptide 2, found in Galleria mellonella (Greater wax moth).